We begin with the raw amino-acid sequence, 227 residues long: 2-C-methyl-D-erythritol 4-phosphate cytidylyltransferase (227 aa).

It belongs to the IspD/TarI cytidylyltransferase family. IspD subfamily.

The enzyme catalyses 2-C-methyl-D-erythritol 4-phosphate + CTP + H(+) = 4-CDP-2-C-methyl-D-erythritol + diphosphate. It functions in the pathway isoprenoid biosynthesis; isopentenyl diphosphate biosynthesis via DXP pathway; isopentenyl diphosphate from 1-deoxy-D-xylulose 5-phosphate: step 2/6. Catalyzes the formation of 4-diphosphocytidyl-2-C-methyl-D-erythritol from CTP and 2-C-methyl-D-erythritol 4-phosphate (MEP). The polypeptide is 2-C-methyl-D-erythritol 4-phosphate cytidylyltransferase (Bordetella parapertussis (strain 12822 / ATCC BAA-587 / NCTC 13253)).